The sequence spans 110 residues: UPF0339 protein PA0329 (110 aa).

A run of 2 repeats spans residues 10–58 (AKDG…AFEV) and 61–109 (ANNG…LSDE). Residues 91-110 (EAGVQSVKRATPEAGLSDES) form a disordered region.

Belongs to the UPF0339 family. Duplicated subfamily.

This is UPF0339 protein PA0329 from Pseudomonas aeruginosa (strain ATCC 15692 / DSM 22644 / CIP 104116 / JCM 14847 / LMG 12228 / 1C / PRS 101 / PAO1).